Consider the following 366-residue polypeptide: Probable dual-specificity RNA methyltransferase RlmN (366 aa).

Residue Glu-107 is the Proton acceptor of the active site. A Radical SAM core domain is found at 113-342 (AEERMTACLS…MAQKFHVTVR (230 aa)). Cys-120 and Cys-353 are oxidised to a cystine. [4Fe-4S] cluster-binding residues include Cys-127, Cys-131, and Cys-134. Residues 177-178 (GE), Ser-210, 233-235 (SLH), and Asn-310 each bind S-adenosyl-L-methionine. Cys-353 acts as the S-methylcysteine intermediate in catalysis.

Belongs to the radical SAM superfamily. RlmN family. Requires [4Fe-4S] cluster as cofactor.

It is found in the cytoplasm. The enzyme catalyses adenosine(2503) in 23S rRNA + 2 reduced [2Fe-2S]-[ferredoxin] + 2 S-adenosyl-L-methionine = 2-methyladenosine(2503) in 23S rRNA + 5'-deoxyadenosine + L-methionine + 2 oxidized [2Fe-2S]-[ferredoxin] + S-adenosyl-L-homocysteine. It carries out the reaction adenosine(37) in tRNA + 2 reduced [2Fe-2S]-[ferredoxin] + 2 S-adenosyl-L-methionine = 2-methyladenosine(37) in tRNA + 5'-deoxyadenosine + L-methionine + 2 oxidized [2Fe-2S]-[ferredoxin] + S-adenosyl-L-homocysteine. Its function is as follows. Specifically methylates position 2 of adenine 2503 in 23S rRNA and position 2 of adenine 37 in tRNAs. The chain is Probable dual-specificity RNA methyltransferase RlmN from Chlorobium chlorochromatii (strain CaD3).